Reading from the N-terminus, the 532-residue chain is Amidophosphoribosyltransferase 3, chloroplastic (532 aa).

Residues 1–59 constitute a chloroplast transit peptide; sequence MAFSVEEISSILPNSLSANPRNVSQNTISPSFFKPSLKPYASKTLISLSCRRSLSPVFS. The active-site Nucleophile is cysteine 77. The Glutamine amidotransferase type-2 domain maps to 77–296; the sequence is CGVVGIHGDP…PGEIVVVDRN (220 aa). Cysteine 313, cysteine 459, cysteine 511, and cysteine 514 together coordinate [4Fe-4S] cluster.

It in the C-terminal section; belongs to the purine/pyrimidine phosphoribosyltransferase family. [4Fe-4S] cluster is required as a cofactor. The cofactor is Mg(2+). As to expression, mostly expressed at low levels in leaves, and, to a lower extent, in cotyledons.

Its subcellular location is the plastid. It is found in the chloroplast stroma. It carries out the reaction 5-phospho-beta-D-ribosylamine + L-glutamate + diphosphate = 5-phospho-alpha-D-ribose 1-diphosphate + L-glutamine + H2O. The protein operates within purine metabolism; IMP biosynthesis via de novo pathway; N(1)-(5-phospho-D-ribosyl)glycinamide from 5-phospho-alpha-D-ribose 1-diphosphate: step 1/2. Its activity is regulated as follows. Inhibited by the phenyltriazole acetic acid compound [5-(4-chlorophenyl)-1-isopropyl-1H-[1,2,4]triazol-3-yl]-acetic acid (DAS734), a bleaching herbicide. Repressed by AMP, ADP, ATP and GTP, and slightly by GMP. Functionally, catalyzes the first committed step of 'de novo' purine biosynthesis from glutamine. The sequence is that of Amidophosphoribosyltransferase 3, chloroplastic (ASE3) from Arabidopsis thaliana (Mouse-ear cress).